We begin with the raw amino-acid sequence, 286 residues long: 4-diphosphocytidyl-2-C-methyl-D-erythritol kinase (286 aa).

The active site involves lysine 11. 94 to 104 (PMGGGIGGGSS) lines the ATP pocket. Aspartate 136 is a catalytic residue.

It belongs to the GHMP kinase family. IspE subfamily.

The enzyme catalyses 4-CDP-2-C-methyl-D-erythritol + ATP = 4-CDP-2-C-methyl-D-erythritol 2-phosphate + ADP + H(+). It functions in the pathway isoprenoid biosynthesis; isopentenyl diphosphate biosynthesis via DXP pathway; isopentenyl diphosphate from 1-deoxy-D-xylulose 5-phosphate: step 3/6. In terms of biological role, catalyzes the phosphorylation of the position 2 hydroxy group of 4-diphosphocytidyl-2C-methyl-D-erythritol. The protein is 4-diphosphocytidyl-2-C-methyl-D-erythritol kinase of Pseudomonas putida (strain ATCC 47054 / DSM 6125 / CFBP 8728 / NCIMB 11950 / KT2440).